The primary structure comprises 261 residues: Imidazole glycerol phosphate synthase subunit HisF (261 aa).

Active-site residues include D11 and D130.

Belongs to the HisA/HisF family. In terms of assembly, heterodimer of HisH and HisF.

The protein resides in the cytoplasm. It catalyses the reaction 5-[(5-phospho-1-deoxy-D-ribulos-1-ylimino)methylamino]-1-(5-phospho-beta-D-ribosyl)imidazole-4-carboxamide + L-glutamine = D-erythro-1-(imidazol-4-yl)glycerol 3-phosphate + 5-amino-1-(5-phospho-beta-D-ribosyl)imidazole-4-carboxamide + L-glutamate + H(+). The protein operates within amino-acid biosynthesis; L-histidine biosynthesis; L-histidine from 5-phospho-alpha-D-ribose 1-diphosphate: step 5/9. Its function is as follows. IGPS catalyzes the conversion of PRFAR and glutamine to IGP, AICAR and glutamate. The HisF subunit catalyzes the cyclization activity that produces IGP and AICAR from PRFAR using the ammonia provided by the HisH subunit. The polypeptide is Imidazole glycerol phosphate synthase subunit HisF (Limosilactobacillus fermentum (strain NBRC 3956 / LMG 18251) (Lactobacillus fermentum)).